The primary structure comprises 395 residues: Forkhead box protein I3 (395 aa).

Residues 131 to 225 (RPPYSYSALI…DNGNFRRKRK (95 aa)) constitute a DNA-binding region (fork-head). Disordered regions lie at residues 216–288 (DNGN…GIIS) and 322–370 (RNFS…SSGS). The short motif at 221–227 (RRKRKRR) is the Nuclear localization signal element. Low complexity predominate over residues 234–245 (ATTAAASSLGGL). Residues 325 to 335 (SAGQLSGGTFT) are compositionally biased toward polar residues. Residues 336 to 349 (PSSSSSQEVPSPEQ) are compositionally biased toward low complexity.

As to expression, initially expressed in the pre-placodal ectoderm surrounding the neural plate, which will give rise to all craniofacial sensory organs. Expression then becomes restricted to a region immediately anterior to the first pair of somites that will give rise to the otic and epibranchial placodes, before becoming down-regulated from this region and restricted to the ectoderm and endoderm of the pharyngeal arches.

It is found in the nucleus. In terms of biological role, transcription factor required for pharyngeal arch development, which is involved in otic placode development. This Gallus gallus (Chicken) protein is Forkhead box protein I3.